A 303-amino-acid polypeptide reads, in one-letter code: Pseudouridine-5'-phosphate glycosidase (303 aa).

Glu23 functions as the Proton donor in the catalytic mechanism. Positions 85 and 105 each coordinate substrate. Asp137 is a binding site for Mn(2+). Residue 139–141 participates in substrate binding; the sequence is SQD. The active-site Nucleophile is the Lys158.

The protein belongs to the pseudouridine-5'-phosphate glycosidase family. Homotrimer. Mn(2+) serves as cofactor.

The catalysed reaction is D-ribose 5-phosphate + uracil = psi-UMP + H2O. In terms of biological role, catalyzes the reversible cleavage of pseudouridine 5'-phosphate (PsiMP) to ribose 5-phosphate and uracil. Functions biologically in the cleavage direction, as part of a pseudouridine degradation pathway. The polypeptide is Pseudouridine-5'-phosphate glycosidase (Myxococcus xanthus (strain DK1622)).